The following is a 366-amino-acid chain: Elongation factor Ts, mitochondrial (366 aa).

The N-terminal 50 residues, 1 to 50 (MAWSQSARKPMIGLLFRAQQHSARGYSYSAFQAHLSSSNVDQSATLLRRF), are a transit peptide targeting the mitochondrion.

The protein belongs to the EF-Ts family.

It is found in the mitochondrion. Its function is as follows. Associates with the EF-Tu.GDP complex and induces the exchange of GDP to GTP. It remains bound to the aminoacyl-tRNA.EF-Tu.GTP complex up to the GTP hydrolysis stage on the ribosome. This Oryza sativa subsp. japonica (Rice) protein is Elongation factor Ts, mitochondrial.